The following is a 354-amino-acid chain: Peptide chain release factor 1 (354 aa).

Glutamine 230 bears the N5-methylglutamine mark.

The protein belongs to the prokaryotic/mitochondrial release factor family. Post-translationally, methylated by PrmC. Methylation increases the termination efficiency of RF1.

It localises to the cytoplasm. Its function is as follows. Peptide chain release factor 1 directs the termination of translation in response to the peptide chain termination codons UAG and UAA. The polypeptide is Peptide chain release factor 1 (Thermus thermophilus (strain ATCC BAA-163 / DSM 7039 / HB27)).